Here is a 218-residue protein sequence, read N- to C-terminus: Cytochrome b6 (218 aa).

Residues 35 to 55 form a helical membrane-spanning segment; that stretch reads IFYCLGGITLVCFLVQFATGF. Cys-38 contributes to the heme c binding site. Heme b is bound by residues His-89 and His-103. 3 consecutive transmembrane segments (helical) span residues 93 to 113, 119 to 139, and 189 to 209; these read ASMM…TGGF, LTWV…VTGY, and LHTF…FLMI. 2 residues coordinate heme b: His-190 and His-205.

Belongs to the cytochrome b family. PetB subfamily. The 4 large subunits of the cytochrome b6-f complex are cytochrome b6, subunit IV (17 kDa polypeptide, PetD), cytochrome f and the Rieske protein, while the 4 small subunits are PetG, PetL, PetM and PetN. The complex functions as a dimer. It depends on heme b as a cofactor. The cofactor is heme c.

The protein resides in the cellular thylakoid membrane. Functionally, component of the cytochrome b6-f complex, which mediates electron transfer between photosystem II (PSII) and photosystem I (PSI), cyclic electron flow around PSI, and state transitions. The protein is Cytochrome b6 of Prochlorococcus marinus (strain MIT 9303).